We begin with the raw amino-acid sequence, 377 residues long: Dihydroorotase, mitochondrial (377 aa).

5 residues coordinate Zn(2+): His44, His46, Lys130, His168, and His206. An N6-carboxylysine modification is found at Lys130. Ser223 is modified (phosphoserine). Residue Asp280 coordinates Zn(2+).

Belongs to the metallo-dependent hydrolases superfamily. DHOase family. Class II DHOase subfamily. Requires Zn(2+) as cofactor.

It localises to the mitochondrion. The enzyme catalyses (S)-dihydroorotate + H2O = N-carbamoyl-L-aspartate + H(+). The protein operates within pyrimidine metabolism; UMP biosynthesis via de novo pathway; (S)-dihydroorotate from bicarbonate: step 3/3. The chain is Dihydroorotase, mitochondrial (PYR4) from Arabidopsis thaliana (Mouse-ear cress).